The sequence spans 216 residues: Ribonuclease HII (216 aa).

Positions 27–216 (ASLAGVDEAG…VKEHVKNCEG (190 aa)) constitute an RNase H type-2 domain. A divalent metal cation-binding residues include D33, E34, and D125.

It belongs to the RNase HII family. Requires Mn(2+) as cofactor. Mg(2+) is required as a cofactor.

It is found in the cytoplasm. The catalysed reaction is Endonucleolytic cleavage to 5'-phosphomonoester.. In terms of biological role, endonuclease that specifically degrades the RNA of RNA-DNA hybrids. The protein is Ribonuclease HII of Geotalea daltonii (strain DSM 22248 / JCM 15807 / FRC-32) (Geobacter daltonii).